A 310-amino-acid polypeptide reads, in one-letter code: ADP-L-glycero-D-manno-heptose-6-epimerase (310 aa).

Residues 10-11 (FI), 31-32 (DN), Lys-38, Lys-53, 75-79 (EGACS), and Asn-92 each bind NADP(+). Residue Tyr-140 is the Proton acceptor of the active site. Position 144 (Lys-144) interacts with NADP(+). Asn-169 provides a ligand contact to substrate. NADP(+) is bound by residues Val-170 and Lys-178. The active-site Proton acceptor is Lys-178. Substrate contacts are provided by residues Ser-180, His-187, 201 to 204 (FEGS), and Arg-209. Lys-267 carries the post-translational modification N6-acetyllysine. Tyr-272 is a substrate binding site.

It belongs to the NAD(P)-dependent epimerase/dehydratase family. HldD subfamily. Homopentamer. It depends on NADP(+) as a cofactor.

It catalyses the reaction ADP-D-glycero-beta-D-manno-heptose = ADP-L-glycero-beta-D-manno-heptose. It participates in nucleotide-sugar biosynthesis; ADP-L-glycero-beta-D-manno-heptose biosynthesis; ADP-L-glycero-beta-D-manno-heptose from D-glycero-beta-D-manno-heptose 7-phosphate: step 4/4. Catalyzes the interconversion between ADP-D-glycero-beta-D-manno-heptose and ADP-L-glycero-beta-D-manno-heptose via an epimerization at carbon 6 of the heptose. This Escherichia coli (strain ATCC 8739 / DSM 1576 / NBRC 3972 / NCIMB 8545 / WDCM 00012 / Crooks) protein is ADP-L-glycero-D-manno-heptose-6-epimerase.